The sequence spans 399 residues: C-type lectin domain family 4 member M (399 aa).

Over methionine 1 to glycine 49 the chain is Cytoplasmic. The Endocytosis signal motif lies at leucine 14–leucine 15. A helical; Signal-anchor for type II membrane protein transmembrane segment spans residues proline 50–valine 70. Residues glutamine 71–glutamate 399 are Extracellular-facing. Residue asparagine 92 is glycosylated (N-linked (GlcNAc...) asparagine). A run of 7 repeats spans residues lysine 108–serine 130, arginine 131–serine 153, arginine 154–serine 176, lysine 177–serine 199, lysine 200–serine 222, lysine 223–serine 245, and lysine 246–cysteine 268. The 7 X approximate tandem repeats stretch occupies residues lysine 108–proline 269. Intrachain disulfides connect cysteine 265–cysteine 395, cysteine 268–cysteine 279, cysteine 296–cysteine 389, and cysteine 368–cysteine 381. Residues phenylalanine 274 to lysine 390 enclose the C-type lectin domain. Ca(2+) contacts are provided by glutamate 359, asparagine 361, serine 363, glutamate 366, asparagine 377, and aspartate 378. Asparagine 361 carries N-linked (GlcNAc...) asparagine glycosylation.

In terms of assembly, homotetramer.

The protein resides in the membrane. Functionally, probable pathogen-recognition receptor involved in peripheral immune surveillance in liver. May mediate the endocytosis of pathogens which are subsequently degraded in lysosomal compartments. Probably recognizes in a calcium-dependent manner high mannose N-linked oligosaccharides in a variety of pathogen antigens. Is a receptor for ICAM3, probably by binding to mannose-like carbohydrates. The chain is C-type lectin domain family 4 member M (CLEC4M) from Nomascus concolor (Black crested gibbon).